Here is a 906-residue protein sequence, read N- to C-terminus: Protein translocase subunit SecA (906 aa).

ATP contacts are provided by residues Gln-87, 105–109, and Asp-507; that span reads GEGKT. Residues Cys-890, Cys-892, Cys-901, and His-902 each contribute to the Zn(2+) site.

Belongs to the SecA family. As to quaternary structure, monomer and homodimer. Part of the essential Sec protein translocation apparatus which comprises SecA, SecYEG and auxiliary proteins SecDF-YajC and YidC. Requires Zn(2+) as cofactor.

The protein localises to the cell inner membrane. It localises to the cytoplasm. It catalyses the reaction ATP + H2O + cellular proteinSide 1 = ADP + phosphate + cellular proteinSide 2.. Part of the Sec protein translocase complex. Interacts with the SecYEG preprotein conducting channel. Has a central role in coupling the hydrolysis of ATP to the transfer of proteins into and across the cell membrane, serving both as a receptor for the preprotein-SecB complex and as an ATP-driven molecular motor driving the stepwise translocation of polypeptide chains across the membrane. This chain is Protein translocase subunit SecA, found in Thiobacillus denitrificans (strain ATCC 25259 / T1).